A 340-amino-acid chain; its full sequence is Chitinase 2 (340 aa).

An N-terminal signal peptide occupies residues 1-32 (MSTPRAAASLAKKAALVALAVLAAALATAARA). Residues 33 to 73 (EQCGAQAGGARCPNCLCCSRWGWCGTTSDFCGDGCQSQCSG) form the Chitin-binding type-1 domain. Disulfide bonds link C35–C50, C44–C56, C47–C74, C49–C63, C67–C71, C110–C172, C184–C192, and C291–C323. Catalysis depends on E154, which acts as the Proton donor.

This sequence belongs to the glycosyl hydrolase 19 family. Chitinase class I subfamily. In terms of tissue distribution, expressed in roots, sheaths and meristems.

The enzyme catalyses Random endo-hydrolysis of N-acetyl-beta-D-glucosaminide (1-&gt;4)-beta-linkages in chitin and chitodextrins.. Its function is as follows. Hydrolyzes chitin and plays a role in defense against fungal pathogens containing chitin. Its overexpression confers enhanced resistance to sheath blight pathogen (R.solani). This is Chitinase 2 (Cht2) from Oryza sativa subsp. japonica (Rice).